The primary structure comprises 89 residues: Small ribosomal subunit protein uS14A (89 aa).

Belongs to the universal ribosomal protein uS14 family. In terms of assembly, part of the 30S ribosomal subunit. Contacts proteins S3 and S10.

Binds 16S rRNA, required for the assembly of 30S particles and may also be responsible for determining the conformation of the 16S rRNA at the A site. The polypeptide is Small ribosomal subunit protein uS14A (Staphylococcus aureus (strain MRSA252)).